The sequence spans 151 residues: Deoxyuridine 5'-triphosphate nucleotidohydrolase (151 aa).

Residues 70 to 72 (RSG), Asn-83, 87 to 89 (LID), and Met-97 each bind substrate.

The protein belongs to the dUTPase family. Mg(2+) is required as a cofactor.

It catalyses the reaction dUTP + H2O = dUMP + diphosphate + H(+). Its pathway is pyrimidine metabolism; dUMP biosynthesis; dUMP from dCTP (dUTP route): step 2/2. Functionally, this enzyme is involved in nucleotide metabolism: it produces dUMP, the immediate precursor of thymidine nucleotides and it decreases the intracellular concentration of dUTP so that uracil cannot be incorporated into DNA. The sequence is that of Deoxyuridine 5'-triphosphate nucleotidohydrolase from Pseudomonas entomophila (strain L48).